The following is a 639-amino-acid chain: Coiled-coil domain-containing protein 27 (639 aa).

A disordered region spans residues 154–176 (YPRKRSEPSDPSPTGSPTVVKKS). A coiled-coil region spans residues 203 to 242 (QRFSEMESQMQKKDQEILTLQKEKEALKKQLKNLLRGKGT). The disordered stretch occupies residues 291 to 385 (ESSKELHVEP…EECHPKRSYS (95 aa)). The segment covering 292–309 (SSKELHVEPGSAIEEKSS) has biased composition (basic and acidic residues). Over residues 310–320 (EGPPEEAAAAK) the composition is skewed to low complexity. Composition is skewed to acidic residues over residues 336-350 (GPEEEEEEEEEEVEG) and 358-369 (EGEILVNEEEAS). Positions 370–380 (WELREDEECHP) are enriched in basic and acidic residues.

This Mus musculus (Mouse) protein is Coiled-coil domain-containing protein 27 (Ccdc27).